The chain runs to 316 residues: GTP cyclohydrolase FolE2 1 (316 aa).

This sequence belongs to the GTP cyclohydrolase IV family.

The enzyme catalyses GTP + H2O = 7,8-dihydroneopterin 3'-triphosphate + formate + H(+). It participates in cofactor biosynthesis; 7,8-dihydroneopterin triphosphate biosynthesis; 7,8-dihydroneopterin triphosphate from GTP: step 1/1. Its function is as follows. Converts GTP to 7,8-dihydroneopterin triphosphate. The sequence is that of GTP cyclohydrolase FolE2 1 from Burkholderia orbicola (strain AU 1054).